The sequence spans 543 residues: Chaperonin GroEL 2 (543 aa).

Residues 29–32 (TLGP), 86–90 (DGTTT), glycine 413, and aspartate 495 each bind ATP. The disordered stretch occupies residues 524-543 (KPEPKENAPTGAGMGGDFDY).

The protein belongs to the chaperonin (HSP60) family. Forms a cylinder of 14 subunits composed of two heptameric rings stacked back-to-back. Interacts with the co-chaperonin GroES.

It localises to the cytoplasm. The enzyme catalyses ATP + H2O + a folded polypeptide = ADP + phosphate + an unfolded polypeptide.. In terms of biological role, together with its co-chaperonin GroES, plays an essential role in assisting protein folding. The GroEL-GroES system forms a nano-cage that allows encapsulation of the non-native substrate proteins and provides a physical environment optimized to promote and accelerate protein folding. In Acaryochloris marina (strain MBIC 11017), this protein is Chaperonin GroEL 2.